Here is a 175-residue protein sequence, read N- to C-terminus: Sialidase 85-1.3 (175 aa).

This sequence belongs to the glycosyl hydrolase 33 family.

It carries out the reaction Hydrolysis of alpha-(2-&gt;3)-, alpha-(2-&gt;6)-, alpha-(2-&gt;8)- glycosidic linkages of terminal sialic acid residues in oligosaccharides, glycoproteins, glycolipids, colominic acid and synthetic substrates.. Developmentally regulated neuraminidase implicated in parasite invasion of cells. May contribute to the pathology during T.cruzi infection by cleaving sialic acid from cells of the immune system. The protein is Sialidase 85-1.3 (SA85-1.3) of Trypanosoma cruzi.